The chain runs to 744 residues: FHF complex subunit HOOK-interacting protein 2B (744 aa).

Disordered regions lie at residues 184 to 213 (KTARESTAPPKDIAGYRDKDCPHSDALNRD) and 510 to 530 (LDSGLQPSTKPPPAPATSSDG). Residues 197–213 (AGYRDKDCPHSDALNRD) show a composition bias toward basic and acidic residues.

It belongs to the FHIP family. As to expression, expressed in colon.

Its function is as follows. Able to activate MAPK/ERK and TGFB signaling pathways. May regulate the activity of genes involved in intestinal barrier function and immunoprotective inflammation. May play a role in cell proliferation. In Mus musculus (Mouse), this protein is FHF complex subunit HOOK-interacting protein 2B.